The chain runs to 200 residues: Large ribosomal subunit protein bL25 (200 aa).

This sequence belongs to the bacterial ribosomal protein bL25 family. CTC subfamily. In terms of assembly, part of the 50S ribosomal subunit; part of the 5S rRNA/L5/L18/L25 subcomplex. Contacts the 5S rRNA. Binds to the 5S rRNA independently of L5 and L18.

This is one of the proteins that binds to the 5S RNA in the ribosome where it forms part of the central protuberance. The protein is Large ribosomal subunit protein bL25 of Pseudomonas fluorescens (strain SBW25).